Reading from the N-terminus, the 230-residue chain is UPF0494 membrane protein C1348.07 (230 aa).

Transmembrane regions (helical) follow at residues 78 to 98, 120 to 140, and 148 to 168; these read WPLL…NFEV, IWGP…GLIY, and AIPL…VAMV.

Belongs to the UPF0494 family.

It localises to the vacuole. The protein resides in the membrane. In Schizosaccharomyces pombe (strain 972 / ATCC 24843) (Fission yeast), this protein is UPF0494 membrane protein C1348.07.